The chain runs to 495 residues: Divinyl ether synthase CYP74M3 (495 aa).

C446 lines the heme pocket.

It belongs to the cytochrome P450 family. Requires heme as cofactor.

It carries out the reaction (13S)-hydroperoxy-(9Z,11E)-octadecadienoate = etheroleate + H2O. It catalyses the reaction (13S)-hydroperoxy-(9Z,11E,15Z)-octadecatrienoate = etherolenate + H2O. It functions in the pathway lipid metabolism; oxylipin biosynthesis. In terms of biological role, divinyl ether synthase involved in oxylipin biosynthesis. Catalyzes the conversion of (13S)-hydroperoxy-(9Z,11E)-octadecadienoate (13-HPOD) to etheroleate and (13S)-hydroperoxy-(9Z,11E,15Z)-octadecatrienoate (13-HPOT) to etherolenate. Has no activity with the corresponding 9-hydroperoxides (9-HPOD and 9-HPOT). In Selaginella moellendorffii (Spikemoss), this protein is Divinyl ether synthase CYP74M3.